The chain runs to 535 residues: Zinc transporter ZIP5 (535 aa).

The signal sequence occupies residues 1–19 (MGPPVHHLLTGLCVGVALG). Residues 20-210 (WVGGSVPNLG…PAPPGDVLSA (191 aa)) are Extracellular-facing. 2 N-linked (GlcNAc...) asparagine glycosylation sites follow: Asn-49 and Asn-158. Residues 211-231 (LLHSGLAVLFLSLPAPLSLLL) traverse the membrane as a helical segment. The Cytoplasmic segment spans residues 232-242 (LRLLGPRLLRP). A helical transmembrane segment spans residues 243–263 (VLGFLGALAVGTLCGDALLHL). Residues 264–285 (LPHAQGGRHTGPSEQSEEDLGP) are Extracellular-facing. Residues 286 to 306 (GLSVLGGLFLLFMLENTLGLV) form a helical membrane-spanning segment. Residues 307–439 (RHRGLRPRCC…LLQEGLSFRK (133 aa)) are Cytoplasmic-facing. The segment at 316–373 (CRNKRDLGEPNPDPEDGSGMVLRPLQAASEPEVQGQRENRQSSPSLAPPGHQGHSHEH) is disordered. Phosphoserine is present on Ser-333. A Pros-methylhistidine modification is found at His-371. A helical membrane pass occupies residues 440 to 460 (LLLLSLVSGALGLGGAALGVG). Over 461-465 (LSLGP) the chain is Extracellular. Residues 466 to 486 (VPLTPWVFGTTAGVFLYVALV) traverse the membrane as a helical segment. Residues 487–503 (DMLPTLLRPPEPLPVFH) are Cytoplasmic-facing. The chain crosses the membrane as a helical span at residues 504–524 (VLLQGLGLLLGGSLMFTIALL). At 525–535 (EEQLVPTVPDG) the chain is on the extracellular side.

It belongs to the ZIP transporter (TC 2.A.5) family. In terms of assembly, homodimer. In terms of processing, N-Glycosylated. Post-translationally, methylated at His-371 by METTL9. Expressed in all stages of eye development and primarily in the sclera and several layers of the retina, including the inner segment, outer plexiform layer and ganglion cell layer. Expressed in pancreas, kidney and the proximal and distal small intestine as well as in the embryonic visceral yolk sac. In the proximal intestine, expression is predominant in the crypts but diminishes toward the apical regions of the villi.

The protein resides in the basolateral cell membrane. It catalyses the reaction Zn(2+)(in) = Zn(2+)(out). Its function is as follows. Uniporter that transports zinc(2+) into polarized cells of enterocytes, pancreatic acinar and endoderm cells across the basolateral membrane and participates, notably, in zinc excretion from the intestine by the uptake of zinc from the blood into the intestine. The transport mechanism is temperature- and concentration-dependent and saturable. In addition, is also a high affinity copper transporter in vitro. Also may regulate glucose-stimulated insulin secretion (GSIS) in islets primarily through the zinc-activated SIRT1-PPARGC1A axis. Could regulate the BMP/TGF-beta (bone morphogenetic protein/transforming growth factor-beta) signaling pathway and modulates extracellular matrix (ECM) proteins of the sclera. Plays a role in eye development. In Mus musculus (Mouse), this protein is Zinc transporter ZIP5.